The sequence spans 110 residues: METLAQHRHARSSAQKVRLVADLIRGKKVSQALDILTYTNKKAAVFVKKVLESAIANAEHNDGADIDDLKVAKIFVDEGPSMKRIMPRAKGRADRILKRTSHITVVVSDR.

The protein belongs to the universal ribosomal protein uL22 family. In terms of assembly, part of the 50S ribosomal subunit.

Functionally, this protein binds specifically to 23S rRNA; its binding is stimulated by other ribosomal proteins, e.g. L4, L17, and L20. It is important during the early stages of 50S assembly. It makes multiple contacts with different domains of the 23S rRNA in the assembled 50S subunit and ribosome. In terms of biological role, the globular domain of the protein is located near the polypeptide exit tunnel on the outside of the subunit, while an extended beta-hairpin is found that lines the wall of the exit tunnel in the center of the 70S ribosome. In Enterobacter sp. (strain 638), this protein is Large ribosomal subunit protein uL22.